The chain runs to 42 residues: uncharacterized protein (42 aa).

This is an uncharacterized protein from Musa (BBTV).